The primary structure comprises 134 residues: MRMHLHLTLVALGAAYVCANAVESTMNRLVAETLTLLSSHRTLLIGDGNLMIPTPQHTNHQLCIEEVFQGIDTLKNQTAQGDAVKKIFQNLSLIKEYIDLQKRKCGGERWRVKQFLDYLQVFLGVINTEWTMES.

A signal peptide spans 1-21 (MRMHLHLTLVALGAAYVCANA). 2 N-linked (GlcNAc...) asparagine glycosylation sites follow: N76 and N90.

It belongs to the IL-5 family. Homodimer; disulfide-linked. Interacts with IL5RA. Interacts with CSF2RB.

It localises to the secreted. In terms of biological role, homodimeric cytokine expressed predominantly by T-lymphocytes and NK cells that plays an important role in the survival, differentiation, and chemotaxis of eosinophils. Also acts on activated and resting B-cells to induce immunoglobulin production, growth, and differentiation. Mechanistically, exerts its biological effects through a receptor composed of IL5RA subunit and the cytokine receptor common subunit beta/CSF2RB. Binding to the receptor leads to activation of various kinases including LYN, SYK and JAK2 and thereby propagates signals through the RAS-MAPK and JAK-STAT5 pathways respectively. This is Interleukin-5 (IL5) from Bos taurus (Bovine).